The chain runs to 333 residues: DNA-directed RNA polymerase subunit alpha (333 aa).

The alpha N-terminal domain (alpha-NTD) stretch occupies residues 1 to 234 (MQISVNEFLT…QQLAAFVDLK (234 aa)). The tract at residues 248-333 (IDPILLRPVD…SLKKDDKATA (86 aa)) is alpha C-terminal domain (alpha-CTD).

It belongs to the RNA polymerase alpha chain family. Homodimer. The RNAP catalytic core consists of 2 alpha, 1 beta, 1 beta' and 1 omega subunit. When a sigma factor is associated with the core the holoenzyme is formed, which can initiate transcription.

The catalysed reaction is RNA(n) + a ribonucleoside 5'-triphosphate = RNA(n+1) + diphosphate. Functionally, DNA-dependent RNA polymerase catalyzes the transcription of DNA into RNA using the four ribonucleoside triphosphates as substrates. This Pseudomonas entomophila (strain L48) protein is DNA-directed RNA polymerase subunit alpha.